The primary structure comprises 302 residues: Quinolinate synthase (302 aa).

Iminosuccinate is bound by residues H24 and S41. C86 contributes to the [4Fe-4S] cluster binding site. Iminosuccinate contacts are provided by residues 112–114 (YVN) and S129. C173 lines the [4Fe-4S] cluster pocket. Residues 199–201 (HPE) and T216 contribute to the iminosuccinate site. C259 is a [4Fe-4S] cluster binding site.

This sequence belongs to the quinolinate synthase family. Type 2 subfamily. [4Fe-4S] cluster is required as a cofactor.

Its subcellular location is the cytoplasm. It catalyses the reaction iminosuccinate + dihydroxyacetone phosphate = quinolinate + phosphate + 2 H2O + H(+). Its pathway is cofactor biosynthesis; NAD(+) biosynthesis; quinolinate from iminoaspartate: step 1/1. Catalyzes the condensation of iminoaspartate with dihydroxyacetone phosphate to form quinolinate. The protein is Quinolinate synthase of Thermococcus kodakarensis (strain ATCC BAA-918 / JCM 12380 / KOD1) (Pyrococcus kodakaraensis (strain KOD1)).